The sequence spans 269 residues: MSRYQLCFEALAQKQQGAFVPFVTLGDPDAELSLKIIDALIEGGADALEIGIPFSDPLADGPTIQGANLRALNANVTPTLCFELLSQIRQKHPTIPIGLLVYANLVFSNGVDNFYHKCQQAGVDSVLIGDVPLREAKQFREAALSANIAPIFICPPNADDELLQELATSAEGYTYLLSRAGVTGTDKRAEQSLTHLTSKLKAYNAPPALQGFGISEPQQVSQAISNGAFGAISGSAVVQIIENNLHQPDVMLKMLTQFVQQMKAATISV.

Residues Glu49 and Asp60 each act as proton acceptor in the active site.

Belongs to the TrpA family. As to quaternary structure, tetramer of two alpha and two beta chains.

It catalyses the reaction (1S,2R)-1-C-(indol-3-yl)glycerol 3-phosphate + L-serine = D-glyceraldehyde 3-phosphate + L-tryptophan + H2O. The protein operates within amino-acid biosynthesis; L-tryptophan biosynthesis; L-tryptophan from chorismate: step 5/5. The alpha subunit is responsible for the aldol cleavage of indoleglycerol phosphate to indole and glyceraldehyde 3-phosphate. The sequence is that of Tryptophan synthase alpha chain from Proteus mirabilis (strain HI4320).